Reading from the N-terminus, the 246-residue chain is FAD synthetase (246 aa).

Belongs to the RibF family.

The enzyme catalyses FMN + ATP + H(+) = FAD + diphosphate. It participates in cofactor biosynthesis; FAD biosynthesis; FAD from FMN: step 1/1. Catalyzes the adenylation of flavin mononucleotide (FMN) to form flavin adenine dinucleotide (FAD) coenzyme. Can also catalyze, with lower efficiency, the adenylation of the toxic riboflavin analogs 8-demethyl-8-aminoriboflavin mononucleotide (AFMN) and roseoflavin mononucleotide (RoFMN) to 8-demethyl-8-aminoriboflavin adenine dinucleotide (AFAD) and roseoflavin adenine dinucleotide (RoFAD), respectively. This is FAD synthetase from Listeria monocytogenes serovar 1/2a (strain ATCC BAA-679 / EGD-e).